The following is a 404-amino-acid chain: uncharacterized protein (404 aa).

4 residues coordinate [4Fe-4S] cluster: Cys-69, Cys-75, Cys-78, and Cys-166. Residues Gln-226, Tyr-253, Glu-274, and Asp-334 each contribute to the S-adenosyl-L-methionine site. Cys-361 functions as the Nucleophile in the catalytic mechanism.

The protein belongs to the class I-like SAM-binding methyltransferase superfamily. RNA M5U methyltransferase family.

This is an uncharacterized protein from Treponema denticola (strain ATCC 35405 / DSM 14222 / CIP 103919 / JCM 8153 / KCTC 15104).